The sequence spans 201 residues: Recombination protein RecR (201 aa).

The C4-type zinc-finger motif lies at 60–75 (CSCCGNVDTIDPCTVC). Positions 83-178 (AVIIVVEDVA…RITRLAHGVP (96 aa)) constitute a Toprim domain.

It belongs to the RecR family.

May play a role in DNA repair. It seems to be involved in an RecBC-independent recombinational process of DNA repair. It may act with RecF and RecO. The chain is Recombination protein RecR from Rhizobium meliloti (strain 1021) (Ensifer meliloti).